Reading from the N-terminus, the 84-residue chain is Small ribosomal subunit protein bS20 (84 aa).

The disordered stretch occupies residues methionine 1–methionine 28.

This sequence belongs to the bacterial ribosomal protein bS20 family.

Binds directly to 16S ribosomal RNA. This Listeria monocytogenes serotype 4b (strain CLIP80459) protein is Small ribosomal subunit protein bS20.